Reading from the N-terminus, the 466-residue chain is Argininosuccinate lyase (466 aa).

Belongs to the lyase 1 family. Argininosuccinate lyase subfamily.

It localises to the cytoplasm. It carries out the reaction 2-(N(omega)-L-arginino)succinate = fumarate + L-arginine. Its pathway is amino-acid biosynthesis; L-arginine biosynthesis; L-arginine from L-ornithine and carbamoyl phosphate: step 3/3. This is Argininosuccinate lyase from Syntrophobacter fumaroxidans (strain DSM 10017 / MPOB).